Here is a 254-residue protein sequence, read N- to C-terminus: uncharacterized protein (254 aa).

8 helical membrane-spanning segments follow: residues 41-61, 64-84, 91-111, 125-145, 146-166, 172-192, 204-224, and 232-252; these read VFVFIFFLLAATISFTQIKII, IFQAPAIGIKFLQLAPGEYFF, IYCGIVATTPFGVYQVILYIL, ILIGSIVLFIVGGIFAYFVLA, PAALNFLISYGADIVEPLWSF, FILLLLFSTGLAFEIPIIQLL, MLLAWRYIIIISTIIGAVLTP, and IIMSSAVLALYFSGVIILFLL.

The protein belongs to the TatC family.

The protein resides in the plastid. It localises to the chloroplast membrane. This is an uncharacterized protein from Porphyra purpurea (Red seaweed).